Here is a 365-residue protein sequence, read N- to C-terminus: MSKIKVLIVDDSAFMRKVLEDILKSDDEIEVVATAKDGKEAFELVKKLEPNVITMDVEMPIMNGIDATKQIMAYKPTPILMLSAVTKQGSEATLKALDNGAVDFIEKPSGSVSLDIRKIGEKIIKQVKDASKSKVRIKSSRILENIKKEKQDESSTPKPQVEKTSGLSPEKLNDTAILIGSSTGGPPVVSSIISNIPKNTPPIFIVQHMPKGFTRVFAERMNNNSAITVKEAEHGEIVKPDHAYVAPGDSQMVLQKRGGNVYIIIDENMPKIHGTKPTVDVTAEYVTKYYGKNTIGVLLTGIGRDGANGLKMVKNKGGYTIAQNQDTCVIYGMPKTAIEMNVVDKVMDPIDIPLEIIKFAKKIGG.

The Response regulatory domain occupies 5–122 (KVLIVDDSAF…SLDIRKIGEK (118 aa)). Position 56 is a 4-aspartylphosphate (D56). The segment covering 146-155 (IKKEKQDESS) has biased composition (basic and acidic residues). The interval 146–167 (IKKEKQDESSTPKPQVEKTSGL) is disordered. Residues 156 to 167 (TPKPQVEKTSGL) show a composition bias toward polar residues. Residues 177–363 (ILIGSSTGGP…LEIIKFAKKI (187 aa)) form the CheB-type methylesterase domain. Residues S182, H208, and D305 contribute to the active site.

This sequence belongs to the CheB family. In terms of processing, phosphorylated by CheA. Phosphorylation of the N-terminal regulatory domain activates the methylesterase activity.

It is found in the cytoplasm. It catalyses the reaction [protein]-L-glutamate 5-O-methyl ester + H2O = L-glutamyl-[protein] + methanol + H(+). The catalysed reaction is L-glutaminyl-[protein] + H2O = L-glutamyl-[protein] + NH4(+). Its function is as follows. Involved in chemotaxis. Part of a chemotaxis signal transduction system that modulates chemotaxis in response to various stimuli. Catalyzes the demethylation of specific methylglutamate residues introduced into the chemoreceptors (methyl-accepting chemotaxis proteins or MCP) by CheR. Also mediates the irreversible deamidation of specific glutamine residues to glutamic acid. This Methanococcus maripaludis (strain DSM 14266 / JCM 13030 / NBRC 101832 / S2 / LL) protein is Protein-glutamate methylesterase/protein-glutamine glutaminase.